Here is a 379-residue protein sequence, read N- to C-terminus: Inactive 2'-5'-oligoadenylate synthase 1B (379 aa).

The Cytoplasmic segment spans residues 1 to 355 (MEQELRSIPA…VPTEVDIPSQ (355 aa)). A helical; Anchor for type IV membrane protein membrane pass occupies residues 356–374 (NYFFHIICLIFWLLLRLIF). Over 375–379 (GKHSV) the chain is Extracellular.

The protein belongs to the 2-5A synthase family. As to quaternary structure, interacts with OSBPL1A and ABCF3. Highly expressed in the brain, liver, spleen and heart.

The protein resides in the endoplasmic reticulum membrane. Its function is as follows. Does not have 2'-5'-OAS activity, but can bind double-stranded RNA. Displays antiviral activity against viruses via an alternative antiviral pathway independent of RNase L. This is Inactive 2'-5'-oligoadenylate synthase 1B (Oas1b) from Rattus norvegicus (Rat).